The following is a 1194-amino-acid chain: Protein argonaute 3 (1194 aa).

Residues 1-98 show a composition bias toward basic and acidic residues; sequence MDRGGYRGGR…GRGGGGDRGR (98 aa). Disordered stretches follow at residues 1 to 277 and 299 to 341; these read MDRG…VSQS and TVLP…DKGG. Positions 142 to 158 are enriched in low complexity; that stretch reads PPSSSQAQVSQGVAPGD. Over residues 167–180 the composition is skewed to basic and acidic residues; the sequence is VGRDGVGDVGRDGV. The span at 181 to 214 shows a compositional bias: gly residues; that stretch reads GDVGQGGVGDVGQVGVGDVGQGGVGDVGQGGVGD. Residues 215–228 show a composition bias toward basic and acidic residues; it reads VGRDGVGDVGRDGV. Residues 229-238 are compositionally biased toward gly residues; that stretch reads GDVGRGGVGD. Low complexity-rich tracts occupy residues 256 to 277 and 299 to 316; these read QLQQ…VSQS and TVLP…HTAS. Polar residues predominate over residues 317–326; sequence GSQVMTPKPS. Positions 327 to 341 are enriched in basic and acidic residues; it reads SSDKKEPVKRPDKGG. The PAZ domain occupies 540 to 656; the sequence is SVIEYLKLYF…VPMEFCNLVE (117 aa). A Piwi domain is found at 841–1145; that stretch reads LVLCAMTGKH…AASRGRVYYE (305 aa).

The protein belongs to the argonaute family. Ago subfamily.

Its function is as follows. Involved in RNA-mediated post-transcriptional gene silencing (PTGS). Main component of the RNA-induced silencing complex (RISC) that binds to a short guide RNA such as a microRNA (miRNA) or small interfering RNA (siRNA). RISC uses the mature miRNA or siRNA as a guide for slicer-directed cleavage of homologous mRNAs to repress gene expression. The protein is Protein argonaute 3 (AGO3) of Arabidopsis thaliana (Mouse-ear cress).